The chain runs to 624 residues: Exocyst complex component EXO70B1 (624 aa).

The interval 148 to 176 is disordered; the sequence is FGLNPQGDAGAMNHRFDSEEEEDDDRDFN.

It belongs to the EXO70 family. In terms of assembly, interacts with EXO70B2, SEC5A and EXO84B. Binds to PUB18. Binds directly to B1L at the plasma membrane and in small vesicles. Post-translationally, target of the E3 ubiquitin-protein ligase PUB18 that mediates its ubiquitination and degradation via the 26S proteasome.

It localises to the cytoplasmic vesicle. It is found in the phagosome. The protein localises to the endomembrane system. The protein resides in the cell membrane. Its subcellular location is the vesicle. Functionally, component of an exocyst subcomplex specifically involved in autophagy-related, Golgi-independent membrane traffic to the vacuole. Regulates autophagosome formation and autophagy-related Golgi-independent import into the vacuole. Positive regulator of both abscisic acid (ABA)-promoted and mannitol (drought)-promoted stomatal closure. Involved in the regulation of lateral root formation. In Arabidopsis thaliana (Mouse-ear cress), this protein is Exocyst complex component EXO70B1.